Consider the following 286-residue polypeptide: Formamidopyrimidine-DNA glycosylase (286 aa).

The active-site Schiff-base intermediate with DNA is proline 2. Glutamate 3 serves as the catalytic Proton donor. Lysine 60 functions as the Proton donor; for beta-elimination activity in the catalytic mechanism. Histidine 103, arginine 122, and arginine 167 together coordinate DNA. The FPG-type zinc-finger motif lies at 252–286; the sequence is WVYRRNQKPCRKCGTLIEKTKVAGRSTHWCPNCQN. Arginine 276 acts as the Proton donor; for delta-elimination activity in catalysis.

Belongs to the FPG family. Monomer. The cofactor is Zn(2+).

It catalyses the reaction Hydrolysis of DNA containing ring-opened 7-methylguanine residues, releasing 2,6-diamino-4-hydroxy-5-(N-methyl)formamidopyrimidine.. It carries out the reaction 2'-deoxyribonucleotide-(2'-deoxyribose 5'-phosphate)-2'-deoxyribonucleotide-DNA = a 3'-end 2'-deoxyribonucleotide-(2,3-dehydro-2,3-deoxyribose 5'-phosphate)-DNA + a 5'-end 5'-phospho-2'-deoxyribonucleoside-DNA + H(+). Functionally, involved in base excision repair of DNA damaged by oxidation or by mutagenic agents. Acts as a DNA glycosylase that recognizes and removes damaged bases. Has a preference for oxidized purines, such as 7,8-dihydro-8-oxoguanine (8-oxoG). Has AP (apurinic/apyrimidinic) lyase activity and introduces nicks in the DNA strand. Cleaves the DNA backbone by beta-delta elimination to generate a single-strand break at the site of the removed base with both 3'- and 5'-phosphates. This chain is Formamidopyrimidine-DNA glycosylase, found in Prochlorococcus marinus (strain MIT 9211).